Consider the following 111-residue polypeptide: Large ribosomal subunit protein uL24 (111 aa).

Belongs to the universal ribosomal protein uL24 family. In terms of assembly, part of the 50S ribosomal subunit.

In terms of biological role, one of two assembly initiator proteins, it binds directly to the 5'-end of the 23S rRNA, where it nucleates assembly of the 50S subunit. Functionally, one of the proteins that surrounds the polypeptide exit tunnel on the outside of the subunit. In Myxococcus xanthus (strain DK1622), this protein is Large ribosomal subunit protein uL24.